The sequence spans 91 residues: Progonadoliberin-1 (91 aa).

The first 23 residues, 1–23 (MEPIPKLLAGLLLLTLCVVGCSS), serve as a signal peptide directing secretion. At glutamine 24 the chain carries Pyrrolidone carboxylic acid. At glycine 33 the chain carries Glycine amide.

It belongs to the GnRH family. In terms of processing, the precursor is cleaved by ACE, which removes the Gly-Lys-Arg peptide at the C-terminus, leading to mature hormone. The mature form of Gonadoliberin-1 is also cleaved and degraded by ACE.

It localises to the secreted. In terms of biological role, stimulates the secretion of gonadotropins; it stimulates the secretion of both luteinizing and follicle-stimulating hormones. This chain is Progonadoliberin-1 (GNRH1), found in Sus scrofa (Pig).